Reading from the N-terminus, the 106-residue chain is Replication protein A 14 kDa subunit B (106 aa).

M1 is subject to N-acetylmethionine.

This sequence belongs to the replication factor A protein 3 family. In terms of assembly, component of the heterotrimeric canonical replication protein A complex (RPA).

The protein resides in the nucleus. In terms of biological role, as part of the replication protein A (RPA/RP-A), a single-stranded DNA-binding heterotrimeric complex, may play an essential role in DNA replication, recombination and repair. Binds and stabilizes single-stranded DNA intermediates, preventing complementary DNA reannealing and recruiting different proteins involved in DNA metabolism. The sequence is that of Replication protein A 14 kDa subunit B (RPA3B) from Arabidopsis thaliana (Mouse-ear cress).